A 211-amino-acid chain; its full sequence is Thiamine-phosphate synthase (211 aa).

Residues 36–40 (QLREK) and Asn-68 contribute to the 4-amino-2-methyl-5-(diphosphooxymethyl)pyrimidine site. Residues Asp-69 and Asp-88 each coordinate Mg(2+). Ser-107 is a 4-amino-2-methyl-5-(diphosphooxymethyl)pyrimidine binding site. Position 133 to 135 (133 to 135 (TGS)) interacts with 2-[(2R,5Z)-2-carboxy-4-methylthiazol-5(2H)-ylidene]ethyl phosphate. A 4-amino-2-methyl-5-(diphosphooxymethyl)pyrimidine-binding site is contributed by Lys-136. Residues Gly-167 and 187-188 (IT) each bind 2-[(2R,5Z)-2-carboxy-4-methylthiazol-5(2H)-ylidene]ethyl phosphate.

Belongs to the thiamine-phosphate synthase family. Mg(2+) serves as cofactor.

The catalysed reaction is 2-[(2R,5Z)-2-carboxy-4-methylthiazol-5(2H)-ylidene]ethyl phosphate + 4-amino-2-methyl-5-(diphosphooxymethyl)pyrimidine + 2 H(+) = thiamine phosphate + CO2 + diphosphate. The enzyme catalyses 2-(2-carboxy-4-methylthiazol-5-yl)ethyl phosphate + 4-amino-2-methyl-5-(diphosphooxymethyl)pyrimidine + 2 H(+) = thiamine phosphate + CO2 + diphosphate. It carries out the reaction 4-methyl-5-(2-phosphooxyethyl)-thiazole + 4-amino-2-methyl-5-(diphosphooxymethyl)pyrimidine + H(+) = thiamine phosphate + diphosphate. It participates in cofactor biosynthesis; thiamine diphosphate biosynthesis; thiamine phosphate from 4-amino-2-methyl-5-diphosphomethylpyrimidine and 4-methyl-5-(2-phosphoethyl)-thiazole: step 1/1. Condenses 4-methyl-5-(beta-hydroxyethyl)thiazole monophosphate (THZ-P) and 2-methyl-4-amino-5-hydroxymethyl pyrimidine pyrophosphate (HMP-PP) to form thiamine monophosphate (TMP). The protein is Thiamine-phosphate synthase of Haloarcula marismortui (strain ATCC 43049 / DSM 3752 / JCM 8966 / VKM B-1809) (Halobacterium marismortui).